The sequence spans 239 residues: tRNA (guanine-N(1)-)-methyltransferase (239 aa).

Residues Gly-112 and 131-136 (LGDFIL) each bind S-adenosyl-L-methionine.

Belongs to the RNA methyltransferase TrmD family. In terms of assembly, homodimer.

It is found in the cytoplasm. It carries out the reaction guanosine(37) in tRNA + S-adenosyl-L-methionine = N(1)-methylguanosine(37) in tRNA + S-adenosyl-L-homocysteine + H(+). Its function is as follows. Specifically methylates guanosine-37 in various tRNAs. The polypeptide is tRNA (guanine-N(1)-)-methyltransferase (Clostridium tetani (strain Massachusetts / E88)).